Consider the following 304-residue polypeptide: MAVEKKFVQDGYVKASMDEYFAKQLSRAGYGGMDINRTPMGTQITVYAEKPGMVIGKAGKVIRKLTRDVDRLYDLDNPQIDAQEVKRPELNAQMMASRLASSIERGWYFRKAGHNTMRAVMNAGALGCEIVISGKLTGSRSRVEKMVNGYIKHAGKPVDDIVDDGFATAVKKLGTLGCKVRIIHPDAVLPDSYRLKNAEELGSLVSTPVEEEKSAGIEELVEVEAKGEVAEAEEAVVEETAKAEAETVEETVEEVAASEVEADMITGESVTEEGEERREVNGVWQHKHGGHDYWHPTGRMHRES.

Residues 17–86 (MDEYFAKQLS…NPQIDAQEVK (70 aa)) enclose the KH type-2 domain.

It belongs to the universal ribosomal protein uS3 family. Part of the 30S ribosomal subunit.

Binds the lower part of the 30S subunit head. The protein is Small ribosomal subunit protein uS3 of Methanococcoides burtonii (strain DSM 6242 / NBRC 107633 / OCM 468 / ACE-M).